The following is a 690-amino-acid chain: Elongation factor G (690 aa).

Residues 8 to 282 enclose the tr-type G domain; the sequence is ERVRNIGIAA…AVIDYLPAPV (275 aa). Residues 17 to 24, 81 to 85, and 135 to 138 each bind GTP; these read AHIDAGKT, DTPGH, and NKMD.

It belongs to the TRAFAC class translation factor GTPase superfamily. Classic translation factor GTPase family. EF-G/EF-2 subfamily.

It localises to the cytoplasm. In terms of biological role, catalyzes the GTP-dependent ribosomal translocation step during translation elongation. During this step, the ribosome changes from the pre-translocational (PRE) to the post-translocational (POST) state as the newly formed A-site-bound peptidyl-tRNA and P-site-bound deacylated tRNA move to the P and E sites, respectively. Catalyzes the coordinated movement of the two tRNA molecules, the mRNA and conformational changes in the ribosome. In Parasynechococcus marenigrum (strain WH8102), this protein is Elongation factor G.